A 309-amino-acid polypeptide reads, in one-letter code: tRNA pseudouridine synthase B (309 aa).

Asp40 serves as the catalytic Nucleophile.

The protein belongs to the pseudouridine synthase TruB family. Type 1 subfamily.

The enzyme catalyses uridine(55) in tRNA = pseudouridine(55) in tRNA. Its function is as follows. Responsible for synthesis of pseudouridine from uracil-55 in the psi GC loop of transfer RNAs. The protein is tRNA pseudouridine synthase B of Mycobacterium avium (strain 104).